Reading from the N-terminus, the 1071-residue chain is ATP-dependent helicase/deoxyribonuclease subunit B (1071 aa).

This sequence belongs to the helicase family. AddB/RexB type 2 subfamily. As to quaternary structure, heterodimer of AddA and RexB. Mg(2+) serves as cofactor.

Functionally, the heterodimer acts as both an ATP-dependent DNA helicase and an ATP-dependent, dual-direction single-stranded exonuclease. Recognizes the chi site generating a DNA molecule suitable for the initiation of homologous recombination. This subunit has 5' -&gt; 3' nuclease activity but not helicase activity. This chain is ATP-dependent helicase/deoxyribonuclease subunit B, found in Streptococcus pyogenes serotype M3 (strain ATCC BAA-595 / MGAS315).